Consider the following 564-residue polypeptide: Pyranose 2-oxidase (564 aa).

Residues 1–25 constitute a propeptide that is removed on maturation; it reads MPIRLSKEKINDLLQRSQGDLTSSQ. His-158 bears the Tele-8alpha-FAD histidine mark. Substrate is bound by residues Gln-392 and His-394. His-498 acts as the Proton acceptor in catalysis. The active site involves Asn-541.

This sequence belongs to the GMC oxidoreductase family. Homotetramer. It depends on FAD as a cofactor.

The catalysed reaction is D-glucose + O2 = 2-dehydro-D-glucose + H2O2. Functionally, catalyzes the oxidation of various aldopyranoses and disaccharides on carbon-2 to the corresponding 2-keto sugars concomitant with the reduction of O(2) to H(2)O(2). The preferred substrate is D-glucose which is converted to 2-dehydro-D-glucose. Acts also on D-xylose, L-sorbose, D-galactose and 1,5-anhydroglucitol, a diagnostic marker of diabetes mellitus. This chain is Pyranose 2-oxidase (p2ox), found in Tricholoma matsutake (Matsutake mushroom).